The primary structure comprises 769 residues: Multiple C2 domain and transmembrane region protein 5 (769 aa).

3 C2 domains span residues S23 to Y143, P184 to F305, and Y345 to Y467. Ca(2+) contacts are provided by D56, D62, D109, D111, and D116. Helical transmembrane passes span I604–I624 and L712–V732.

The protein belongs to the MCTP family. The cofactor is Ca(2+). In terms of tissue distribution, highly expressed in roots meristems and shoot apical meristems (SAMs). Observed in flowers.

The protein resides in the endoplasmic reticulum membrane. May function as a signaling molecule by regulating the trafficking of other regulators. This chain is Multiple C2 domain and transmembrane region protein 5, found in Arabidopsis thaliana (Mouse-ear cress).